Reading from the N-terminus, the 57-residue chain is Large ribosomal subunit protein bL33 (57 aa).

It belongs to the bacterial ribosomal protein bL33 family.

The protein is Large ribosomal subunit protein bL33 of Shewanella denitrificans (strain OS217 / ATCC BAA-1090 / DSM 15013).